The chain runs to 2326 residues: Nonribosomal peptide synthetase inpB (2326 aa).

Positions 8-84 (SPSEWLQLEL…SLYSMAQGPA (77 aa)) constitute a Carrier 1 domain. Residue Ser-45 is modified to O-(pantetheine 4'-phosphoryl)serine. Residues 87–121 (ASSSTSDNASDKDSSLDDSETGALTPTTDAGSSLA) are disordered. Positions 108–121 (GALTPTTDAGSSLA) are enriched in polar residues. The condensation 1 stretch occupies residues 144-568 (QAVVPCSAIQ…LLSPGEVSQL (425 aa)). Residues 593–997 (LQPGAAAVNS…GRRDTQVKIR (405 aa)) are adenylation 1. The region spanning 1145 to 1221 (EPSTETEFKL…DLARAVESRV (77 aa)) is the Carrier 2 domain. Ser-1182 is subject to O-(pantetheine 4'-phosphoryl)serine. A disordered region spans residues 1226–1247 (DEEDPAPFSVWRESRGSEPSEE). The segment at 1266 to 1680 (EDVLPCTALQ…LLSPEDVNQL (415 aa)) is condensation 2. The adenylation 2 stretch occupies residues 1702 to 2097 (EVARSRPGAA…GRIDTQIKIR (396 aa)). Positions 2216–2294 (PPSTEMEKAL…DLAVLLEKRP (79 aa)) constitute a Carrier 3 domain. Ser-2253 is subject to O-(pantetheine 4'-phosphoryl)serine.

This sequence belongs to the NRP synthetase family.

It functions in the pathway secondary metabolite biosynthesis. Functionally, nonribosomal peptide synthetase; part of the inp gene cluster that mediates the biosynthesis of fellutamide B, a mycotoxin that acts as a proteasome inhibitor. In the first step of fellutabmide B biosynthesis inpC activates 3-hydroxydodecanoic acid to generate 3-hydroxydodecanoyl-AMP that is then loaded onto the T0 domain of inpB. The 3-hydroxydodecanoyl-S-phosphopantetheinyl-T0 is sequentially extended with L-Asn and L-Gln by the two CAT modules of inpB. The linear lipodipeptide from inpB is then transferred onto inpA for the addition of the third amino acid, L-Leu. Reductive releasing of the lipotripeptide by the TE domain of inpA produces (2S)-fellutamide B. InpF might be involved in the release and transfer of the lipodipeptide from inpB to inpA. The inp cluster-encoded proteasome subunit inpE confers resistance to internally produced fellutamides. The MFS efflux transporter inpD may contribute to fellutamide resistance as well. This is Nonribosomal peptide synthetase inpB from Emericella nidulans (strain FGSC A4 / ATCC 38163 / CBS 112.46 / NRRL 194 / M139) (Aspergillus nidulans).